The sequence spans 131 residues: Ribonuclease P protein component (131 aa).

The protein belongs to the RnpA family. As to quaternary structure, consists of a catalytic RNA component (M1 or rnpB) and a protein subunit.

It catalyses the reaction Endonucleolytic cleavage of RNA, removing 5'-extranucleotides from tRNA precursor.. RNaseP catalyzes the removal of the 5'-leader sequence from pre-tRNA to produce the mature 5'-terminus. It can also cleave other RNA substrates such as 4.5S RNA. The protein component plays an auxiliary but essential role in vivo by binding to the 5'-leader sequence and broadening the substrate specificity of the ribozyme. This is Ribonuclease P protein component from Acinetobacter baylyi (strain ATCC 33305 / BD413 / ADP1).